A 281-amino-acid polypeptide reads, in one-letter code: Pantothenate synthetase (281 aa).

Residue 26–33 participates in ATP binding; the sequence is MGYLHQGH. His33 acts as the Proton donor in catalysis. Position 57 (Gln57) interacts with (R)-pantoate. Gln57 is a binding site for beta-alanine. 143-146 lines the ATP pocket; the sequence is GQKD. Gln149 contributes to the (R)-pantoate binding site. Residues Val172 and 180–183 each bind ATP; that span reads LSSR.

It belongs to the pantothenate synthetase family. Homodimer.

It localises to the cytoplasm. It catalyses the reaction (R)-pantoate + beta-alanine + ATP = (R)-pantothenate + AMP + diphosphate + H(+). It participates in cofactor biosynthesis; (R)-pantothenate biosynthesis; (R)-pantothenate from (R)-pantoate and beta-alanine: step 1/1. In terms of biological role, catalyzes the condensation of pantoate with beta-alanine in an ATP-dependent reaction via a pantoyl-adenylate intermediate. This Chloroflexus aurantiacus (strain ATCC 29366 / DSM 635 / J-10-fl) protein is Pantothenate synthetase.